The following is an 85-amino-acid chain: Actobindin homolog (85 aa).

Residues Asp-35–Ala-52 form the WH2 domain.

In terms of biological role, is able to bind two actin monomers at high concentrations of G-actin. The chain is Actobindin homolog from Entamoeba histolytica.